We begin with the raw amino-acid sequence, 263 residues long: HTH-type transcriptional repressor NanR (263 aa).

The disordered stretch occupies residues 1 to 23 (MSPMNAFDPQAEDSTTTIGRNLR). The 69-residue stretch at 30 to 98 (KKLSEMVEEE…NGERARVSRP (69 aa)) folds into the HTH gntR-type domain. The H-T-H motif DNA-binding region spans 58–77 (ERELMAFFNVGRPSVREALA).

This sequence belongs to the NanR family.

Its function is as follows. Transcriptional repressor that controls expression of the genes required for the catabolism of sialic acids. The sequence is that of HTH-type transcriptional repressor NanR from Escherichia coli O45:K1 (strain S88 / ExPEC).